The primary structure comprises 347 residues: Palmitoyltransferase ZDHHC11 (347 aa).

The Cytoplasmic portion of the chain corresponds to 1–46 (MKEMNICGINKNWVLPEAQENNVKKFLPRPLSRVNGWSPPLHSFQA). A helical transmembrane segment spans residues 47 to 67 (ISWITYLAMSIVTFGIFIPFL). At 68-75 (PYSWKYAA) the chain is on the lumenal side. The chain crosses the membrane as a helical span at residues 76–96 (NIVMGGVFIFHLIVHLIAITI). At 97–170 (DPADTNVRLK…LNNCVGRRNY (74 aa)) the chain is on the cytoplasmic side. The region spanning 128 to 178 (QYCHLCEVTASKKAKHCSACNKCVSGFDHHCKWLNNCVGRRNYWFFFWSVA) is the DHHC domain. The active-site S-palmitoyl cysteine intermediate is the Cys158. The chain crosses the membrane as a helical span at residues 171-191 (WFFFWSVASAAVGILGVMIIL). Over 192–234 (CYICIQYFVNPDELRTDPLYKEIISENTWLLFLSLWPVPVKTP) the chain is Lumenal. Residues 235 to 255 (IVLSIAVMALLLAIASFVMLG) traverse the membrane as a helical segment. Residues 256–347 (HLLIFHLYLI…SPPKICHSED (92 aa)) are Cytoplasmic-facing. The segment covering 291–306 (ELPLQKKGDLPQEKSD) has biased composition (basic and acidic residues). The tract at residues 291 to 332 (ELPLQKKGDLPQEKSDNWAWPKSPPRVGSQKFPVSTLSPKSS) is disordered. The segment covering 322-331 (FPVSTLSPKS) has biased composition (polar residues).

The protein belongs to the DHHC palmitoyltransferase family. Interacts with IRF3 and STING1; in presence of DNA viruses recruits IRF3 to STING1 promoting IRF3 phosphorylation and activation.

The protein resides in the endosome membrane. The enzyme catalyses L-cysteinyl-[protein] + hexadecanoyl-CoA = S-hexadecanoyl-L-cysteinyl-[protein] + CoA. Its function is as follows. Endoplasmic reticulum-localized palmitoyltransferase that could catalyze the addition of palmitate onto various protein substrates and be involved in a variety of cellular processes. Has a palmitoyltransferase activity toward NCDN and regulates NCDN association with endosome membranes through this palmitoylation. May play a role in cell proliferation. Also has a palmitoyltransferase activity-independent function in DNA virus-triggered and CGAS-mediated innate immune response. Functions as an adapter that recruits IRF3 to STING1 to promote the activation of that key transcriptional regulator of type I interferon (IFN)-dependent immune response. This is Palmitoyltransferase ZDHHC11 from Mus musculus (Mouse).